Reading from the N-terminus, the 971-residue chain is Oncostatin-M-specific receptor subunit beta (971 aa).

Positions 1 to 23 are cleaved as a signal peptide; sequence MAFSVVLHPAFLLAVLSLRASRS. The Extracellular segment spans residues 24-737; the sequence is EVLEEPLPLT…VTTPDARSHM (714 aa). N-linked (GlcNAc...) asparagine glycans are attached at residues N74, N97, N130, N162, and N239. An intrachain disulfide couples C242 to C252. N-linked (GlcNAc...) asparagine glycosylation is found at N271, N304, N323, and N377. Fibronectin type-III domains lie at 332–425, 427–523, 524–620, and 622–733; these read APQD…TPET, PSQA…SNDS, GHEE…TQEL, and PLVN…TPDA. The short motif at 412 to 416 is the WSXWS motif element; it reads WSDWT. Residues N491, N541, N577, N689, and N722 are each glycosylated (N-linked (GlcNAc...) asparagine). A helical membrane pass occupies residues 738–758; the sequence is LLQIILPMTLCVLLSIIVCYW. Over 759–971 the chain is Cytoplasmic; sequence KSQWVKEKCY…STVLLGQGEQ (213 aa). The Box 1 motif signature appears at 767–775; it reads CYPDIPNPY. Residues 949-971 are disordered; the sequence is LASPSLKEDNSLTSTVLLGQGEQ. Over residues 959–971 the composition is skewed to polar residues; sequence SLTSTVLLGQGEQ.

This sequence belongs to the type I cytokine receptor family. Type 2 subfamily. Heterodimer composed of OSMR and IL6ST (type II OSM receptor). Heterodimer with IL31RA to form the IL31 receptor. In terms of tissue distribution, widely expressed. Expressed at highest levels in the lung, heart, thymus and spleen. Expressed in dorsal root ganglia.

It localises to the membrane. In terms of biological role, associates with IL31RA to form the IL31 receptor. Binds IL31 to activate STAT3 and possibly STAT1 and STAT5. Capable of transducing OSM-specific signaling events. The protein is Oncostatin-M-specific receptor subunit beta (Osmr) of Mus musculus (Mouse).